The sequence spans 481 residues: Trichosetin biosynthesis cluster MFS transporter (481 aa).

Over residues 1-13 (MSTTPQMSQSGFQ) the composition is skewed to polar residues. The interval 1-63 (MSTTPQMSQS…DGPDDPQHPL (63 aa)) is disordered. A compositionally biased stretch (basic and acidic residues) spans 20-31 (GAREDVGTEAQE). N-linked (GlcNAc...) asparagine glycosylation occurs at asparagine 64. A helical membrane pass occupies residues 72 to 92 (LHVGIVSLSTLAANLAATMFA). A glycan (N-linked (GlcNAc...) asparagine) is linked at asparagine 103. Transmembrane regions (helical) follow at residues 111-131 (AMTV…LAPL), 147-167 (VYMA…FLVF), 169-189 (IIAG…VADL), 200-220 (ALFA…GGFV), and 228-248 (WTFR…FALM). Asparagine 252 is a glycosylation site (N-linked (GlcNAc...) asparagine). 5 helical membrane-spanning segments follow: residues 302–322 (PIVL…FLLF), 353–373 (LLLM…YGWT), 380–400 (WIVP…VVIP), 403–423 (IYLV…ANLL), and 446–466 (GWGN…PWIF).

The protein belongs to the major facilitator superfamily.

It is found in the cell membrane. Efflux pump required for efficient secretion of trichosetin or other secondary metabolies produced by the trichosetin gene cluster. Plays a crucial role in detoxification of the toxic trichosetin in Gibberella fujikuroi cells. The sequence is that of Trichosetin biosynthesis cluster MFS transporter from Gibberella fujikuroi (strain CBS 195.34 / IMI 58289 / NRRL A-6831) (Bakanae and foot rot disease fungus).